The chain runs to 321 residues: Fibronectin type III domain-containing protein 8 (321 aa).

The Fibronectin type-III domain maps to Val175–Thr277.

In Bos taurus (Bovine), this protein is Fibronectin type III domain-containing protein 8 (FNDC8).